The chain runs to 1061 residues: Isoleucine--tRNA ligase (1061 aa).

The 'HIGH' region motif lies at 50-60 (PYTSGSAHMGT). The 'KMSKS' region signature appears at 604-608 (KMSKS). K607 is an ATP binding site.

The protein belongs to the class-I aminoacyl-tRNA synthetase family. IleS type 2 subfamily. Monomer. Zn(2+) is required as a cofactor.

It localises to the cytoplasm. The catalysed reaction is tRNA(Ile) + L-isoleucine + ATP = L-isoleucyl-tRNA(Ile) + AMP + diphosphate. In terms of biological role, catalyzes the attachment of isoleucine to tRNA(Ile). As IleRS can inadvertently accommodate and process structurally similar amino acids such as valine, to avoid such errors it has two additional distinct tRNA(Ile)-dependent editing activities. One activity is designated as 'pretransfer' editing and involves the hydrolysis of activated Val-AMP. The other activity is designated 'posttransfer' editing and involves deacylation of mischarged Val-tRNA(Ile). The polypeptide is Isoleucine--tRNA ligase (Natronomonas pharaonis (strain ATCC 35678 / DSM 2160 / CIP 103997 / JCM 8858 / NBRC 14720 / NCIMB 2260 / Gabara) (Halobacterium pharaonis)).